Consider the following 34-residue polypeptide: MSDIN-like toxin proprotein 3 (34 aa).

Residues 1-10 constitute a propeptide that is removed on maturation; sequence MSDINTARLP. The segment at residues 11–20 is a cross-link (cyclopeptide (Phe-Pro)); that stretch reads FFQPPEFRPP. The propeptide occupies 21-34; that stretch reads CVGDDIEMVLTRGE.

It belongs to the MSDIN fungal toxin family. Processed by the macrocyclase-peptidase enzyme POPB to yield a toxic cyclic decapeptide. POPB first removes 10 residues from the N-terminus. Conformational trapping of the remaining peptide forces the enzyme to release this intermediate rather than proceed to macrocyclization. The enzyme rebinds the remaining peptide in a different conformation and catalyzes macrocyclization of the N-terminal 10 residues.

Functionally, probable toxin that belongs to the MSDIN-like toxin family responsible for a large number of food poisoning cases and deaths. The chain is MSDIN-like toxin proprotein 3 from Amanita bisporigera (Destroying angel).